A 121-amino-acid polypeptide reads, in one-letter code: Small ribosomal subunit protein uS13 (121 aa).

The interval 91–121 (HRRGLPVRGQNSKNNARTRKGPRRTVANKKK) is disordered. Residues 106-121 (ARTRKGPRRTVANKKK) are compositionally biased toward basic residues.

It belongs to the universal ribosomal protein uS13 family. As to quaternary structure, part of the 30S ribosomal subunit. Forms a loose heterodimer with protein S19. Forms two bridges to the 50S subunit in the 70S ribosome.

Functionally, located at the top of the head of the 30S subunit, it contacts several helices of the 16S rRNA. In the 70S ribosome it contacts the 23S rRNA (bridge B1a) and protein L5 of the 50S subunit (bridge B1b), connecting the 2 subunits; these bridges are implicated in subunit movement. Contacts the tRNAs in the A and P-sites. In Bacillus mycoides (strain KBAB4) (Bacillus weihenstephanensis), this protein is Small ribosomal subunit protein uS13.